Consider the following 104-residue polypeptide: MRVRALRLAALVGAGAALALSPLAAGPASADTTVSEPAPSCVTLYQSWRYSQADNGCAQTVTVKVVYEDDTEGLCYAVAPGQITTVGDGYIGSHGHARYLARCL.

The N-terminal stretch at 1–30 is a signal peptide; that stretch reads MRVRALRLAALVGAGAALALSPLAAGPASA. 2 cysteine pairs are disulfide-bonded: Cys41–Cys57 and Cys75–Cys103.

Its function is as follows. Inhibits mammalian alpha-amylases specifically but has no action on plant and microbial alpha-amylases. Forms a tight stoichiometric 1:1 complex with alpha-amylase. This Streptomyces tendae protein is Alpha-amylase inhibitor HOE-467A.